Reading from the N-terminus, the 385-residue chain is 8-amino-7-oxononanoate synthase (385 aa).

Residue arginine 21 coordinates substrate. Residue 108 to 109 coordinates pyridoxal 5'-phosphate; the sequence is GF. Histidine 133 is a binding site for substrate. The pyridoxal 5'-phosphate site is built by serine 179, histidine 207, and threonine 233. Lysine 236 carries the post-translational modification N6-(pyridoxal phosphate)lysine. Threonine 352 provides a ligand contact to substrate.

Belongs to the class-II pyridoxal-phosphate-dependent aminotransferase family. BioF subfamily. As to quaternary structure, homodimer. The cofactor is pyridoxal 5'-phosphate.

The enzyme catalyses 6-carboxyhexanoyl-[ACP] + L-alanine + H(+) = (8S)-8-amino-7-oxononanoate + holo-[ACP] + CO2. Its pathway is cofactor biosynthesis; biotin biosynthesis. Functionally, catalyzes the decarboxylative condensation of pimeloyl-[acyl-carrier protein] and L-alanine to produce 8-amino-7-oxononanoate (AON), [acyl-carrier protein], and carbon dioxide. The polypeptide is 8-amino-7-oxononanoate synthase (Salmonella typhimurium (strain LT2 / SGSC1412 / ATCC 700720)).